A 256-amino-acid polypeptide reads, in one-letter code: 5-keto-4-deoxy-D-glucarate aldolase (256 aa).

Histidine 50 acts as the Proton acceptor in catalysis. Glutamine 151 contacts substrate. Glutamate 153 provides a ligand contact to Mg(2+). Residues serine 178 and aspartate 179 each contribute to the substrate site. Residue aspartate 179 participates in Mg(2+) binding.

Belongs to the HpcH/HpaI aldolase family. KDGluc aldolase subfamily. In terms of assembly, homohexamer; trimer of dimers. Mg(2+) serves as cofactor.

It carries out the reaction 5-dehydro-4-deoxy-D-glucarate = 2-hydroxy-3-oxopropanoate + pyruvate. The enzyme catalyses 2-dehydro-3-deoxy-D-glucarate = 2-hydroxy-3-oxopropanoate + pyruvate. It functions in the pathway carbohydrate acid metabolism; galactarate degradation; D-glycerate from galactarate: step 2/3. Catalyzes the reversible retro-aldol cleavage of both 5-keto-4-deoxy-D-glucarate and 2-keto-3-deoxy-D-glucarate to pyruvate and tartronic semialdehyde. The polypeptide is 5-keto-4-deoxy-D-glucarate aldolase (Salmonella arizonae (strain ATCC BAA-731 / CDC346-86 / RSK2980)).